Reading from the N-terminus, the 173-residue chain is Crossover junction endodeoxyribonuclease RuvC (173 aa).

Catalysis depends on residues Asp8, Glu67, and Asp139. Asp8, Glu67, and Asp139 together coordinate Mg(2+).

The protein belongs to the RuvC family. In terms of assembly, homodimer which binds Holliday junction (HJ) DNA. The HJ becomes 2-fold symmetrical on binding to RuvC with unstacked arms; it has a different conformation from HJ DNA in complex with RuvA. In the full resolvosome a probable DNA-RuvA(4)-RuvB(12)-RuvC(2) complex forms which resolves the HJ. Mg(2+) serves as cofactor.

The protein localises to the cytoplasm. The catalysed reaction is Endonucleolytic cleavage at a junction such as a reciprocal single-stranded crossover between two homologous DNA duplexes (Holliday junction).. Functionally, the RuvA-RuvB-RuvC complex processes Holliday junction (HJ) DNA during genetic recombination and DNA repair. Endonuclease that resolves HJ intermediates. Cleaves cruciform DNA by making single-stranded nicks across the HJ at symmetrical positions within the homologous arms, yielding a 5'-phosphate and a 3'-hydroxyl group; requires a central core of homology in the junction. The consensus cleavage sequence is 5'-(A/T)TT(C/G)-3'. Cleavage occurs on the 3'-side of the TT dinucleotide at the point of strand exchange. HJ branch migration catalyzed by RuvA-RuvB allows RuvC to scan DNA until it finds its consensus sequence, where it cleaves and resolves the cruciform DNA. The chain is Crossover junction endodeoxyribonuclease RuvC from Shewanella pealeana (strain ATCC 700345 / ANG-SQ1).